The chain runs to 202 residues: Small ribosomal subunit protein uS4c-1 (202 aa).

One can recognise an S4 RNA-binding domain in the interval 90–152; that stretch reads MRLDNIVLRA…NKSRQLIDLN (63 aa).

The protein belongs to the universal ribosomal protein uS4 family. Part of the 30S ribosomal subunit. Contacts protein S5. The interaction surface between S4 and S5 is involved in control of translational fidelity.

It is found in the plastid. The protein localises to the chloroplast. In terms of biological role, one of the primary rRNA binding proteins, it binds directly to 16S rRNA where it nucleates assembly of the body of the 30S subunit. Functionally, with S5 and S12 plays an important role in translational accuracy. In Cyanidium caldarium (Red alga), this protein is Small ribosomal subunit protein uS4c-1.